A 509-amino-acid chain; its full sequence is ATP synthase subunit alpha, mitochondrial (509 aa).

171–178 (GDRQTGKT) serves as a coordination point for ATP.

It belongs to the ATPase alpha/beta chains family. F-type ATPases have 2 components, CF(1) - the catalytic core - and CF(0) - the membrane proton channel. CF(1) has five subunits: alpha(3), beta(3), gamma(1), delta(1), epsilon(1). CF(0) has three main subunits: a, b and c.

The protein localises to the mitochondrion. It is found in the mitochondrion inner membrane. Functionally, mitochondrial membrane ATP synthase (F(1)F(0) ATP synthase or Complex V) produces ATP from ADP in the presence of a proton gradient across the membrane which is generated by electron transport complexes of the respiratory chain. F-type ATPases consist of two structural domains, F(1) - containing the extramembraneous catalytic core, and F(0) - containing the membrane proton channel, linked together by a central stalk and a peripheral stalk. During catalysis, ATP synthesis in the catalytic domain of F(1) is coupled via a rotary mechanism of the central stalk subunits to proton translocation. Subunits alpha and beta form the catalytic core in F(1). Rotation of the central stalk against the surrounding alpha(3)beta(3) subunits leads to hydrolysis of ATP in three separate catalytic sites on the beta subunits. Subunit alpha does not bear the catalytic high-affinity ATP-binding sites. The sequence is that of ATP synthase subunit alpha, mitochondrial (ATPA) from Nicotiana plumbaginifolia (Leadwort-leaved tobacco).